Consider the following 299-residue polypeptide: MTHQPSPVIHHHFAPAKINLGLSVLGVRENGYHDLHSLMVPLTVGDELEIRPAGALTLRVEGADLPTDERNLVYRAARAYLDAAGAAGGADLVLHKRLPLASGLGGGSSDAASTLLALAELYPAPDHRPVDLPALALTLGADVPFFLLGGAALAEGVGERLTPVDDLPPVHLVLANAGAEVSAGDAYRWLDETGDFSGKLRLEAMRLALARGVEVPYFNSLQAGVLARVPSVLTTLEALADAGLHSVLMSGSGATCFGLAHDAAQAQAAAAALAQRCPGWWVTAAQVRLPLSDNSGGRT.

The active site involves lysine 17. 99–109 (PLASGLGGGSS) provides a ligand contact to ATP. Aspartate 142 is a catalytic residue.

It belongs to the GHMP kinase family. IspE subfamily.

It carries out the reaction 4-CDP-2-C-methyl-D-erythritol + ATP = 4-CDP-2-C-methyl-D-erythritol 2-phosphate + ADP + H(+). It participates in isoprenoid biosynthesis; isopentenyl diphosphate biosynthesis via DXP pathway; isopentenyl diphosphate from 1-deoxy-D-xylulose 5-phosphate: step 3/6. Functionally, catalyzes the phosphorylation of the position 2 hydroxy group of 4-diphosphocytidyl-2C-methyl-D-erythritol. In Deinococcus radiodurans (strain ATCC 13939 / DSM 20539 / JCM 16871 / CCUG 27074 / LMG 4051 / NBRC 15346 / NCIMB 9279 / VKM B-1422 / R1), this protein is 4-diphosphocytidyl-2-C-methyl-D-erythritol kinase.